A 246-amino-acid chain; its full sequence is UDP-N-acetyl-D-mannosaminuronic acid transferase (246 aa).

This sequence belongs to the glycosyltransferase 26 family.

It carries out the reaction UDP-N-acetyl-alpha-D-mannosaminouronate + N-acetyl-alpha-D-glucosaminyl-di-trans,octa-cis-undecaprenyl diphosphate = beta-D-ManNAcA-(1-&gt;4)-alpha-D-GlcNAc-di-trans,octa-cis-undecaprenyl diphosphate + UDP + H(+). Its pathway is bacterial outer membrane biogenesis; enterobacterial common antigen biosynthesis. In terms of biological role, catalyzes the synthesis of Und-PP-GlcNAc-ManNAcA (Lipid II), the second lipid-linked intermediate involved in enterobacterial common antigen (ECA) synthesis. The sequence is that of UDP-N-acetyl-D-mannosaminuronic acid transferase from Yersinia pestis bv. Antiqua (strain Antiqua).